Here is a 381-residue protein sequence, read N- to C-terminus: uncharacterized protein (381 aa).

Transmembrane regions (helical) follow at residues 22–42 and 246–266; these read GVLLTLAAVAVVASIGTYLTA and LIPENVHWTIWQLWLVVLLVA.

The protein localises to the cell membrane. This is an uncharacterized protein from Mycobacterium tuberculosis (strain ATCC 25618 / H37Rv).